The sequence spans 180 residues: ATP synthase subunit delta (180 aa).

Belongs to the ATPase delta chain family. F-type ATPases have 2 components, F(1) - the catalytic core - and F(0) - the membrane proton channel. F(1) has five subunits: alpha(3), beta(3), gamma(1), delta(1), epsilon(1). F(0) has three main subunits: a(1), b(2) and c(10-14). The alpha and beta chains form an alternating ring which encloses part of the gamma chain. F(1) is attached to F(0) by a central stalk formed by the gamma and epsilon chains, while a peripheral stalk is formed by the delta and b chains.

The protein localises to the cell inner membrane. Its function is as follows. F(1)F(0) ATP synthase produces ATP from ADP in the presence of a proton or sodium gradient. F-type ATPases consist of two structural domains, F(1) containing the extramembraneous catalytic core and F(0) containing the membrane proton channel, linked together by a central stalk and a peripheral stalk. During catalysis, ATP synthesis in the catalytic domain of F(1) is coupled via a rotary mechanism of the central stalk subunits to proton translocation. Functionally, this protein is part of the stalk that links CF(0) to CF(1). It either transmits conformational changes from CF(0) to CF(1) or is implicated in proton conduction. The polypeptide is ATP synthase subunit delta (Geotalea uraniireducens (strain Rf4) (Geobacter uraniireducens)).